A 689-amino-acid polypeptide reads, in one-letter code: Glycine--tRNA ligase beta subunit (689 aa).

This sequence belongs to the class-II aminoacyl-tRNA synthetase family. Tetramer of two alpha and two beta subunits.

It is found in the cytoplasm. It carries out the reaction tRNA(Gly) + glycine + ATP = glycyl-tRNA(Gly) + AMP + diphosphate. The sequence is that of Glycine--tRNA ligase beta subunit from Acinetobacter baylyi (strain ATCC 33305 / BD413 / ADP1).